We begin with the raw amino-acid sequence, 167 residues long: NADH-ubiquinone oxidoreductase chain 6 (167 aa).

Helical transmembrane passes span M1 to N21, S23 to M43, M47 to A67, V86 to G106, and A133 to L153.

It belongs to the complex I subunit 6 family.

The protein resides in the mitochondrion membrane. It carries out the reaction a ubiquinone + NADH + 5 H(+)(in) = a ubiquinol + NAD(+) + 4 H(+)(out). Its function is as follows. Core subunit of the mitochondrial membrane respiratory chain NADH dehydrogenase (Complex I) that is believed to belong to the minimal assembly required for catalysis. Complex I functions in the transfer of electrons from NADH to the respiratory chain. The immediate electron acceptor for the enzyme is believed to be ubiquinone. The polypeptide is NADH-ubiquinone oxidoreductase chain 6 (MT-ND6) (Polypterus ornatipinnis (Ornate bichir)).